The sequence spans 856 residues: DNA mismatch repair protein MutS (856 aa).

618 to 625 (GPNMGGKS) contacts ATP.

Belongs to the DNA mismatch repair MutS family.

In terms of biological role, this protein is involved in the repair of mismatches in DNA. It is possible that it carries out the mismatch recognition step. This protein has a weak ATPase activity. The polypeptide is DNA mismatch repair protein MutS (Shewanella baltica (strain OS185)).